Reading from the N-terminus, the 1056-residue chain is Contactin-5 (1056 aa).

The span at 1-14 (MKADSSSSSSMSSR) shows a compositional bias: low complexity. Residues 1-33 (MKADSSSSSSMSSRMRLRNSHGVGSSSQDWSPF) form a disordered region. Residues 22 to 31 (GVGSSSQDWS) show a composition bias toward polar residues. Ig-like C2-type domains lie at 57–142 (PVFI…IVLS), 154–240 (PFSG…RVLS), 258–343 (PKIE…GHLQ), 348–432 (PQWI…AELK), 438–519 (PMFN…AELT), and 527–622 (PMRV…AELL). 3 disulfides stabilise this stretch: cysteine 81–cysteine 131, cysteine 175–cysteine 227, and cysteine 280–cysteine 327. N-linked (GlcNAc...) asparagine glycosylation is found at asparagine 96 and asparagine 119. Asparagine 355 carries N-linked (GlcNAc...) asparagine glycosylation. 3 disulfides stabilise this stretch: cysteine 369-cysteine 416, cysteine 459-cysteine 507, and cysteine 549-cysteine 606. Residues asparagine 489 and asparagine 496 are each glycosylated (N-linked (GlcNAc...) asparagine). Fibronectin type-III domains lie at 629–727 (PPGV…TKEA), 732–829 (APAN…SAEG), 834–928 (PPSE…TKKN), and 933–1023 (PPGN…TSSG). The segment at 711–736 (GTGDPSPPSRAVRTKEAVPSVAPANV) is disordered. Residues asparagine 772, asparagine 887, asparagine 945, and asparagine 958 are each glycosylated (N-linked (GlcNAc...) asparagine). A lipid anchor (GPI-anchor amidated asparagine) is attached at asparagine 1035. Residues 1036–1056 (SPPGLAWTALFLSLMVPSFPL) constitute a propeptide, removed in mature form.

Belongs to the immunoglobulin superfamily. Contactin family.

It localises to the cell membrane. Contactins mediate cell surface interactions during nervous system development. The protein is Contactin-5 (cntn5) of Danio rerio (Zebrafish).